We begin with the raw amino-acid sequence, 81 residues long: Photosystem I iron-sulfur center (81 aa).

4Fe-4S ferredoxin-type domains follow at residues 2-31 (AHSV…MVPW) and 39-68 (IASA…VRVY). The [4Fe-4S] cluster site is built by Cys11, Cys14, Cys17, Cys21, Cys48, Cys51, Cys54, and Cys58.

The eukaryotic PSI reaction center is composed of at least 11 subunits. Requires [4Fe-4S] cluster as cofactor.

The protein localises to the plastid. It localises to the chloroplast thylakoid membrane. The enzyme catalyses reduced [plastocyanin] + hnu + oxidized [2Fe-2S]-[ferredoxin] = oxidized [plastocyanin] + reduced [2Fe-2S]-[ferredoxin]. In terms of biological role, apoprotein for the two 4Fe-4S centers FA and FB of photosystem I (PSI); essential for photochemical activity. FB is the terminal electron acceptor of PSI, donating electrons to ferredoxin. The C-terminus interacts with PsaA/B/D and helps assemble the protein into the PSI complex. Required for binding of PsaD and PsaE to PSI. PSI is a plastocyanin-ferredoxin oxidoreductase, converting photonic excitation into a charge separation, which transfers an electron from the donor P700 chlorophyll pair to the spectroscopically characterized acceptors A0, A1, FX, FA and FB in turn. This Gnetum parvifolium (Small-leaved jointfir) protein is Photosystem I iron-sulfur center.